A 240-amino-acid chain; its full sequence is Terpene cyclase cdmG (240 aa).

A run of 6 helical transmembrane segments spans residues 16–36 (YASI…LNYG), 48–68 (YGMA…YTVI), 78–98 (IIMT…IKFA), 112–132 (IPFI…ALAA), 134–154 (VGPG…LTIG), and 167–187 (GVSY…VICV). A glycan (N-linked (GlcNAc...) asparagine) is linked at Asn-197. Residues 205–225 (IMKCFSGISLAVEIVYGVTLW) traverse the membrane as a helical segment.

This sequence belongs to the paxB family.

It is found in the membrane. It carries out the reaction verruculide C epoxide = 3-hydroxypentacecilide A. Its pathway is secondary metabolite biosynthesis; terpenoid biosynthesis. In terms of biological role, terpene cyclase; part of the gene cluster that mediates the biosynthesis of chrodrimanin B, a meroterpenoid that acts as a potent blocker of insect GABA-gated chloride channels. The first step of the pathway is the biosynthesis of 6-hydroxymellein by the polyketide synthase cdmE. The prenyltransferase cdmH acts as a 6-hydroxymellein 5-farnesyltransferase and produces the hydrophobic metabolite verruculide C. The FAD-dependent monooxygenase cdmI further converts verruculide C into verruculide B. The terpene cyclase cdmG then produced the pentacyclic molecule 3-hydroxypentacecilide A, the backbone structure of chrodrimanin B, via folding the farnesyl moiety of the substrate into the chair-boat conformation. The short-chain dehydrogenase/reductase cdmF functions as the 3-OH dehydrogenase that oxidizes the C-3 hydroxyl group of 3-hydroxypentacecilide A and produces chrodrimanin C, the dehydrogenated product of 3-hydroxypentacecilide A. The cytochrome P450 monooxygenase cdmJ then accepts both 3-hydroxypentacecilide A and chrodrimanin C and functions as a C-7-beta-hydroxylase to produce respectively chrodrimanin H and chrodrimanin F. The dioxygenase cdmA accepts chrodrimanin H to afford chrodrimanin E, which is further transformed to chrodrimanin A by the dioxygenase cdmD. CdmA can also accept chrodrimanin C as substrate to convert it into verruculide A, which is further converted into chrodrimanin T by cdmD. The last step of the biosynthesis is proposed to be performed by the acetyltransferase cdmC which acetylates chrodrimanin A to yield chrodrimanin B. The pathway may also lead to the production of additional shunt products, including chrodrimanins T and U. The protein is Terpene cyclase cdmG of Talaromyces verruculosus (Penicillium verruculosum).